A 122-amino-acid polypeptide reads, in one-letter code: Conotoxin flf14c (122 aa).

The signal sequence occupies residues Met-1 to Ser-22. Residues Glu-23 to Trp-96 constitute a propeptide that is removed on maturation. A disordered region spans residues Arg-53 to Ser-89. Basic and acidic residues predominate over residues His-62–Glu-85. Cystine bridges form between Cys-101/Cys-121 and Cys-105/Cys-117.

As to expression, expressed by the venom duct.

It localises to the secreted. This Conus anabathrum floridanus (Florida cone) protein is Conotoxin flf14c.